A 326-amino-acid chain; its full sequence is MGVLRAGLCPGLTQDMVQLLQSRGIKTVVDLVCADLEEVAQKCGLSYKALVALRRVLLAQFSAFPFNGADLYEELKTSTAILSTGIGSLDKLLDAGLYTGEVTEIVGAPGSGKTQVCLCVAAHVAHGLQQNVLYIDSNGGLTASRILQLLQARTPDEEEQAGALQRIQVVRAFDIFQMLDVLQDLRGAVSQQVSSSSGTLKVVVVDSVAAVVAPLLGGQQREGLALMMQLARELKTLARDLSVAVLVTNHMTRDRDSGQLKPALGRSWSFVPSTRLLLDSTQSSGSLGSWRVVCLTKSPRLPTGCQETVDLGSLGTPAFQGDHKGH.

Positions 1 to 83 are preferentially binds ssDNA; sequence MGVLRAGLCP…ELKTSTAILS (83 aa). 107–114 contributes to the ATP binding site; the sequence is GAPGSGKT.

This sequence belongs to the RecA family. RAD51 subfamily. As to quaternary structure, part of the BCDX2 complex consisting of RAD51B, RAD51C, RAD51D and XRCC2; the complex has a ring-like structure arranged into a flat disc around a central channel. In the absence of DNA, the BCDX2 subcomplex XRCC2:RAD51D formed a multimeric ring structure; in the presence of single-stranded DNA it formed a filamentous structure with the ssDNA. Interacts with SWSAP1 and ZSWIM7; involved in homologous recombination repair. Interacts with BLM; required for stimulation of BLM activity by the BCDX2 subcomplex XRCC2:RAD51D.

Its subcellular location is the nucleus. Involved in the homologous recombination repair (HRR) pathway of double-stranded DNA breaks arising during DNA replication or induced by DNA-damaging agents. Bind to single-stranded DNA (ssDNA) and has DNA-dependent ATPase activity. Part of the RAD51 paralog protein complex BCDX2 which acts in the BRCA1-BRCA2-dependent HR pathway. Upon DNA damage, BCDX2 acts downstream of BRCA2 recruitment and upstream of RAD51 recruitment. BCDX2 binds predominantly to the intersection of the four duplex arms of the Holliday junction and to junction of replication forks. The BCDX2 complex was originally reported to bind single-stranded DNA, single-stranded gaps in duplex DNA and specifically to nicks in duplex DNA. Involved in telomere maintenance. The BCDX2 subcomplex XRCC2:RAD51D can stimulate Holliday junction resolution by BLM. In Bos taurus (Bovine), this protein is DNA repair protein RAD51 homolog 4 (RAD51D).